Reading from the N-terminus, the 497-residue chain is Glutathione hydrolase 6 (497 aa).

Residues 1-34 (MDATTGPVHYHKLQLWEPGVESEEEEEEEEEEIA) form a disordered region. Residues 1-51 (MDATTGPVHYHKLQLWEPGVESEEEEEEEEEEIAEPLVLSLRRLQNTPRNE) lie on the Cytoplasmic side of the membrane. Residues 20–34 (VESEEEEEEEEEEIA) are compositionally biased toward acidic residues. Residues 52–72 (VGGLPGAWARLLAGLLLLAVS) form a helical; Signal-anchor for type II membrane protein membrane-spanning segment. Residues 73–497 (SSLALRQLHS…PSGCCPFQGY (425 aa)) are Extracellular-facing. Residues Asn164, Asn169, Asn367, and Asn378 are each glycosylated (N-linked (GlcNAc...) asparagine).

The protein belongs to the gamma-glutamyltransferase family. As to quaternary structure, heterodimer composed of the light and heavy chains. The active site is located in the light chain. In terms of processing, cleaved by autocatalysis into a large and a small subunit and the autocatalytic cleavage is essential to the functional activation of the enzyme.

Its subcellular location is the membrane. The catalysed reaction is an N-terminal (5-L-glutamyl)-[peptide] + an alpha-amino acid = 5-L-glutamyl amino acid + an N-terminal L-alpha-aminoacyl-[peptide]. It catalyses the reaction glutathione + H2O = L-cysteinylglycine + L-glutamate. The enzyme catalyses an S-substituted glutathione + H2O = an S-substituted L-cysteinylglycine + L-glutamate. Its pathway is sulfur metabolism; glutathione metabolism. In terms of biological role, hydrolyzes and transfers gamma-glutamyl moieties from glutathione and other gamma-glutamyl compounds to acceptors. The sequence is that of Glutathione hydrolase 6 from Mus musculus (Mouse).